The following is a 375-amino-acid chain: MAALRDAEIQKDVQTYYGQVLKRSADLQTNGCVTTARPVPKHIREALQNVHEEVALRYYGCGLVIPEHLENCWILDLGSGSGRDCYVLSQLVGEKGHVTGIDMTKGQVEVAEKYLDYHMEKYGFQASNVTFIHGYIEKLGEAGIKNESHDIVVSNCVINLVPDKQQVLQEAYRVLKHGGELYFSDVYTSLELPEEIRTHKVLWGECLGGALYWKELAVLAQKIGFCPPRLVTANLITIQNKELERVIGDCRFVSATFRLFKHSKTGPTKRCQVIYNGGITGHEKELMFDANFTFKEGEIVEVDEETAAILKNSRFAQDFLIRPIGEKLPTSGGCSALELKDIITDPFKLAEESDSMKSRCVPDAAGGCCGTKKSC.

S335 is subject to Phosphoserine.

The protein belongs to the methyltransferase superfamily. Arsenite methyltransferase family.

It is found in the cytoplasm. The protein resides in the cytosol. It carries out the reaction arsenic triglutathione + [thioredoxin]-dithiol + S-adenosyl-L-methionine + 2 H2O = methylarsonous acid + [thioredoxin]-disulfide + 3 glutathione + S-adenosyl-L-homocysteine + H(+). It catalyses the reaction arsenic triglutathione + 2 [thioredoxin]-dithiol + 2 S-adenosyl-L-methionine + H2O = dimethylarsinous acid + 2 [thioredoxin]-disulfide + 3 glutathione + 2 S-adenosyl-L-homocysteine + 2 H(+). The catalysed reaction is arsenic triglutathione + 3 [thioredoxin]-dithiol + 3 S-adenosyl-L-methionine = trimethylarsine + 3 [thioredoxin]-disulfide + 3 glutathione + 3 S-adenosyl-L-homocysteine + 3 H(+). Its function is as follows. Catalyzes the transfer of a methyl group from AdoMet to trivalent arsenicals producing methylated and dimethylated arsenicals. It methylates arsenite to form methylarsonate, Me-AsO(3)H(2), which is reduced by methylarsonate reductase to methylarsonite, Me-As(OH)2. Methylarsonite is also a substrate and it is converted into the much less toxic compound dimethylarsinate (cacodylate), Me(2)As(O)-OH. The sequence is that of Arsenite methyltransferase (AS3MT) from Homo sapiens (Human).